Consider the following 413-residue polypeptide: Phosphopentomutase (413 aa).

Positions 11, 306, 311, 347, 348, and 359 each coordinate Mn(2+).

The protein belongs to the phosphopentomutase family. Mn(2+) is required as a cofactor.

It localises to the cytoplasm. It catalyses the reaction 2-deoxy-alpha-D-ribose 1-phosphate = 2-deoxy-D-ribose 5-phosphate. The catalysed reaction is alpha-D-ribose 1-phosphate = D-ribose 5-phosphate. Its pathway is carbohydrate degradation; 2-deoxy-D-ribose 1-phosphate degradation; D-glyceraldehyde 3-phosphate and acetaldehyde from 2-deoxy-alpha-D-ribose 1-phosphate: step 1/2. Its function is as follows. Isomerase that catalyzes the conversion of deoxy-ribose 1-phosphate (dRib-1-P) and ribose 1-phosphate (Rib-1-P) to deoxy-ribose 5-phosphate (dRib-5-P) and ribose 5-phosphate (Rib-5-P), respectively. The polypeptide is Phosphopentomutase (Helicobacter pylori (strain Shi470)).